Here is a 536-residue protein sequence, read N- to C-terminus: Ecdysone receptor (536 aa).

Positions 1–114 (MKTENLIVTT…GPVPRQQEEL (114 aa)) are modulating. The disordered stretch occupies residues 77–107 (SPNSKLDDGNMSVHMGDGLDGKKSSSKKGPV). 2 consecutive NR C4-type zinc fingers follow at residues 115–135 (CLVCGDRASGYHYNALTCEGC) and 151–175 (CKFGHECEMDMYMRRKCQECRLKKC). Residues 115-187 (CLVCGDRASG…VGMRPECVVP (73 aa)) constitute a DNA-binding region (nuclear receptor). The NR LBD domain maps to 278-514 (NQVAVIYKLI…FLEEVWDVGD (237 aa)).

This sequence belongs to the nuclear hormone receptor family. NR1 subfamily.

The protein resides in the nucleus. Receptor for ecdysone. Binds to ecdysone response elements (ECRES). The sequence is that of Ecdysone receptor (EcR) from Chironomus tentans (Midge).